The chain runs to 434 residues: Glutamate-1-semialdehyde 2,1-aminomutase (434 aa).

Lys-265 bears the N6-(pyridoxal phosphate)lysine mark.

Belongs to the class-III pyridoxal-phosphate-dependent aminotransferase family. HemL subfamily. As to quaternary structure, homodimer. It depends on pyridoxal 5'-phosphate as a cofactor.

It localises to the cytoplasm. The catalysed reaction is (S)-4-amino-5-oxopentanoate = 5-aminolevulinate. It participates in porphyrin-containing compound metabolism; protoporphyrin-IX biosynthesis; 5-aminolevulinate from L-glutamyl-tRNA(Glu): step 2/2. In Ruminiclostridium cellulolyticum (strain ATCC 35319 / DSM 5812 / JCM 6584 / H10) (Clostridium cellulolyticum), this protein is Glutamate-1-semialdehyde 2,1-aminomutase.